A 636-amino-acid chain; its full sequence is Chitin synthase VI (636 aa).

The next 4 membrane-spanning stretches (helical) occupy residues 23 to 43, 374 to 394, 399 to 419, and 427 to 447; these read LQWF…LFCI, TIRT…TTTA, LPVG…LYFG, and IWFY…YMVY. Residues 595-636 are disordered; sequence QRLRLEQRPRTGPSLNARWQNGPQASETSQGRSQVDDVGIAF. The span at 607–627 shows a compositional bias: polar residues; the sequence is PSLNARWQNGPQASETSQGRS.

This sequence belongs to the chitin synthase family. Class VI subfamily. In terms of tissue distribution, moderately expressed during appressorium formation.

The protein localises to the cell membrane. It carries out the reaction [(1-&gt;4)-N-acetyl-beta-D-glucosaminyl](n) + UDP-N-acetyl-alpha-D-glucosamine = [(1-&gt;4)-N-acetyl-beta-D-glucosaminyl](n+1) + UDP + H(+). Polymerizes chitin, a structural polymer of the cell wall and septum, by transferring the sugar moiety of UDP-GlcNAc to the non-reducing end of the growing chitin polymer. Contributes to the production of conidia but is the only chitine synthase that does not contribute to the ability of fungal conidia to germinate. Involved in fungal stress tolerances. The chain is Chitin synthase VI from Metarhizium acridum (strain CQMa 102).